Consider the following 150-residue polypeptide: Large ribosomal subunit protein bL9 (150 aa).

It belongs to the bacterial ribosomal protein bL9 family.

In terms of biological role, binds to the 23S rRNA. The chain is Large ribosomal subunit protein bL9 from Shewanella baltica (strain OS155 / ATCC BAA-1091).